The chain runs to 482 residues: Isoxanthopterin deaminase (482 aa).

H74 and H76 together coordinate Zn(2+). Q79 is a binding site for substrate. H246 contacts Zn(2+). Residues E249 and H283 each contribute to the substrate site. Positions 283 and 334 each coordinate Zn(2+).

This sequence belongs to the metallo-dependent hydrolases superfamily. ATZ/TRZ family. Requires Zn(2+) as cofactor.

The catalysed reaction is a 2-amino-4-hydroxypteridine + H2O + H(+) = a 2,4-dihydroxypteridine + NH4(+). The sequence is that of Isoxanthopterin deaminase from Unknown prokaryotic organism.